Here is a 145-residue protein sequence, read N- to C-terminus: Phosphoribosyl-AMP cyclohydrolase (145 aa).

D87 is a binding site for Mg(2+). C88 contacts Zn(2+). Positions 89 and 91 each coordinate Mg(2+). 2 residues coordinate Zn(2+): C104 and C111.

This sequence belongs to the PRA-CH family. In terms of assembly, homodimer. Mg(2+) is required as a cofactor. It depends on Zn(2+) as a cofactor.

The protein resides in the cytoplasm. It carries out the reaction 1-(5-phospho-beta-D-ribosyl)-5'-AMP + H2O = 1-(5-phospho-beta-D-ribosyl)-5-[(5-phospho-beta-D-ribosylamino)methylideneamino]imidazole-4-carboxamide. The protein operates within amino-acid biosynthesis; L-histidine biosynthesis; L-histidine from 5-phospho-alpha-D-ribose 1-diphosphate: step 3/9. In terms of biological role, catalyzes the hydrolysis of the adenine ring of phosphoribosyl-AMP. This chain is Phosphoribosyl-AMP cyclohydrolase, found in Nitrobacter winogradskyi (strain ATCC 25391 / DSM 10237 / CIP 104748 / NCIMB 11846 / Nb-255).